Consider the following 341-residue polypeptide: tRNA N6-adenosine threonylcarbamoyltransferase (341 aa).

Fe cation-binding residues include H111 and H115. Residues 134–138 (LVSGG), D167, G180, and N276 each bind substrate. Residue D304 participates in Fe cation binding.

The protein belongs to the KAE1 / TsaD family. It depends on Fe(2+) as a cofactor.

The protein resides in the cytoplasm. The catalysed reaction is L-threonylcarbamoyladenylate + adenosine(37) in tRNA = N(6)-L-threonylcarbamoyladenosine(37) in tRNA + AMP + H(+). Required for the formation of a threonylcarbamoyl group on adenosine at position 37 (t(6)A37) in tRNAs that read codons beginning with adenine. Is involved in the transfer of the threonylcarbamoyl moiety of threonylcarbamoyl-AMP (TC-AMP) to the N6 group of A37, together with TsaE and TsaB. TsaD likely plays a direct catalytic role in this reaction. In Pseudomonas entomophila (strain L48), this protein is tRNA N6-adenosine threonylcarbamoyltransferase.